We begin with the raw amino-acid sequence, 147 residues long: Large ribosomal subunit protein bL9 (147 aa).

It belongs to the bacterial ribosomal protein bL9 family.

Functionally, binds to the 23S rRNA. The chain is Large ribosomal subunit protein bL9 from Campylobacter lari (strain RM2100 / D67 / ATCC BAA-1060).